We begin with the raw amino-acid sequence, 296 residues long: NAD kinase (296 aa).

Aspartate 73 acts as the Proton acceptor in catalysis. NAD(+) contacts are provided by residues 73–74 (DG), lysine 78, 151–152 (NE), arginine 178, aspartate 180, and 191–196 (TAHAMS).

Belongs to the NAD kinase family. The cofactor is a divalent metal cation.

Its subcellular location is the cytoplasm. It catalyses the reaction NAD(+) + ATP = ADP + NADP(+) + H(+). Functionally, involved in the regulation of the intracellular balance of NAD and NADP, and is a key enzyme in the biosynthesis of NADP. Catalyzes specifically the phosphorylation on 2'-hydroxyl of the adenosine moiety of NAD to yield NADP. The chain is NAD kinase from Francisella tularensis subsp. mediasiatica (strain FSC147).